We begin with the raw amino-acid sequence, 1199 residues long: Tubulin-specific chaperone D (1199 aa).

Disordered stretches follow at residues 1–23 (MALS…VEDA) and 337–361 (QHSI…QDDV). Residues 14–23 (DPVEDPVEDA) are compositionally biased toward acidic residues. HEAT repeat units lie at residues 368–406 (VIEQ…ADDV), 603–639 (EHTA…ARSL), 757–793 (AAAQ…PAFF), and 1111–1147 (GDVR…VLTY).

This sequence belongs to the TBCD family. Found in a complex with at least ARL2, PPP2CB, PPP2R1A, PPP2R2A, PPP2R5E and TBCD. Interacts with PPP2CB. Part of a supercomplex made of cofactors A to E. Cofactors A and D function by capturing and stabilizing tubulin in a quasi-native conformation. Cofactor E binds to the cofactor D-tubulin complex; interaction with cofactor C then causes the release of tubulin polypeptides that are committed to the native state. Interacts with ARL2; interaction is enhanced with the GDP-bound form of ARL2. Does not interact with ARL3, ARL4A and ARL4D. Interacts with beta tubulin. Interacts with TBCE.

The protein resides in the cell junction. Its subcellular location is the tight junction. It localises to the lateral cell membrane. It is found in the cytoplasm. The protein localises to the adherens junction. The protein resides in the cytoskeleton. Its subcellular location is the microtubule organizing center. It localises to the centrosome. Tubulin-folding protein implicated in the first step of the tubulin folding pathway and required for tubulin complex assembly. Involved in the regulation of microtubule polymerization or depolymerization, it modulates microtubule dynamics by capturing GTP-bound beta-tubulin (TUBB). Its ability to interact with beta tubulin is regulated via its interaction with ARL2. Acts as a GTPase-activating protein (GAP) for ARL2. Induces microtubule disruption in absence of ARL2. Increases degradation of beta tubulin, when overexpressed in polarized cells. Promotes epithelial cell detachment, a process antagonized by ARL2. Induces tight adherens and tight junctions disassembly at the lateral cell membrane. Required for correct assembly and maintenance of the mitotic spindle, and proper progression of mitosis. Involved in neuron morphogenesis. This chain is Tubulin-specific chaperone D (TBCD), found in Bos taurus (Bovine).